The sequence spans 389 residues: Protein MEI2-like 7 (389 aa).

A compositionally biased stretch (basic residues) spans 170-184 (RRGMSKVYKPRKPQR). Residues 170 to 211 (RRGMSKVYKPRKPQRAGRERSPSPSPVFTTRPMSPTPPMQKL) form a disordered region. An RRM domain is found at 216 to 320 (TTVMVRNIPN…KIIDIRAARI (105 aa)). The interval 351 to 370 (PRDGSTAGAGAPSPPAVKTV) is disordered.

In terms of biological role, probable RNA-binding protein that may play a role in growth regulation. This Oryza sativa subsp. japonica (Rice) protein is Protein MEI2-like 7 (OML7).